A 216-amino-acid polypeptide reads, in one-letter code: TATA-box-binding protein-like 1 (216 aa).

A run of 2 repeats spans residues 38 to 121 (KPVI…QRLG) and 126 to 210 (FNHF…ILLQ).

It belongs to the TBP family.

Its subcellular location is the nucleus. Functionally, TATA box-binding transcription factor. Members of the TBP family are differentially required to regulate transcription and development during early embryogenesis. In Entamoeba histolytica (strain ATCC 30459 / HM-1:IMSS / ABRM), this protein is TATA-box-binding protein-like 1 (trf1).